The following is a 205-amino-acid chain: Molybdenum cofactor guanylyltransferase (205 aa).

GTP contacts are provided by residues 14–16, Lys-27, Asp-77, and Asp-107; that span reads LAG. A Mg(2+)-binding site is contributed by Asp-107.

Belongs to the MobA family. As to quaternary structure, monomer. Requires Mg(2+) as cofactor.

The protein localises to the cytoplasm. The catalysed reaction is Mo-molybdopterin + GTP + H(+) = Mo-molybdopterin guanine dinucleotide + diphosphate. Functionally, transfers a GMP moiety from GTP to Mo-molybdopterin (Mo-MPT) cofactor (Moco or molybdenum cofactor) to form Mo-molybdopterin guanine dinucleotide (Mo-MGD) cofactor. This Burkholderia ambifaria (strain MC40-6) protein is Molybdenum cofactor guanylyltransferase.